A 423-amino-acid chain; its full sequence is Probable multifunctional protein ADE2 (423 aa).

Residues 1–263 (MSSLAEIASR…KVMDITATFS (263 aa)) form an SAICAR synthetase region. Residues 264 to 423 (KHQQKCHVLV…NIYNANRKLE (160 aa)) form an AIR carboxylase region.

In the N-terminal section; belongs to the SAICAR synthetase family. The protein in the C-terminal section; belongs to the AIR carboxylase family. Class II subfamily.

The enzyme catalyses 5-amino-1-(5-phospho-D-ribosyl)imidazole-4-carboxylate + L-aspartate + ATP = (2S)-2-[5-amino-1-(5-phospho-beta-D-ribosyl)imidazole-4-carboxamido]succinate + ADP + phosphate + 2 H(+). It carries out the reaction 5-amino-1-(5-phospho-D-ribosyl)imidazole-4-carboxylate + H(+) = 5-amino-1-(5-phospho-beta-D-ribosyl)imidazole + CO2. It participates in purine metabolism; IMP biosynthesis via de novo pathway; 5-amino-1-(5-phospho-D-ribosyl)imidazole-4-carboxamide from 5-amino-1-(5-phospho-D-ribosyl)imidazole-4-carboxylate: step 1/2. Its pathway is purine metabolism; IMP biosynthesis via de novo pathway; 5-amino-1-(5-phospho-D-ribosyl)imidazole-4-carboxylate from 5-amino-1-(5-phospho-D-ribosyl)imidazole (carboxylase route): step 1/1. In Caenorhabditis elegans, this protein is Probable multifunctional protein ADE2.